We begin with the raw amino-acid sequence, 676 residues long: Envelope fusion protein (676 aa).

An N-terminal signal peptide occupies residues 1-16; the sequence is MSPLALIVLLAWHATA. Residues Asn76 and Asn87 are each glycosylated (N-linked (GlcNAc...) asparagine; by host). Positions 169-215 form a coiled coil; that stretch reads ARELHDLAKTSNALNEQIKEVTDELVNIAKFEEHKQCLERQRDDLCG. 4 N-linked (GlcNAc...) asparagine; by host glycosylation sites follow: Asn266, Asn469, Asn505, and Asn548. The chain crosses the membrane as a helical span at residues 577 to 597; that stretch reads CATAEAVVACVVLFLVALLLF. N-linked (GlcNAc...) asparagine; by host glycosylation is present at Asn628.

Post-translationally, N-glycosylated.

Its subcellular location is the virion membrane. It is found in the host cell membrane. Functionally, envelope glycoprotein which mediates the fusion of viral and host endosomal membranes leading to virus entry into the host cell. In Lepidoptera (butterflies and moths), this protein is Envelope fusion protein.